The sequence spans 881 residues: Putative cation exchanger C521.04c (881 aa).

The span at 1–19 (MSQPADINQSESSAETITQ) shows a compositional bias: polar residues. Disordered regions lie at residues 1–39 (MSQP…EQNL) and 52–142 (ADAT…LRSE). Over residues 63-77 (NDRDIYSPREIDQYT) the composition is skewed to basic and acidic residues. The segment covering 83 to 95 (RTDPSTSTISNAR) has biased composition (polar residues). The span at 99 to 113 (RNSVSRLSRSSSNVR) shows a compositional bias: low complexity. The residue at position 129 (Ser129) is a Phosphoserine. 8 helical membrane-spanning segments follow: residues 200-220 (IWLI…YIFF), 329-349 (LIIA…IFFV), 407-427 (IYII…FGFF), 438-458 (VFLF…IGMA), 471-491 (GAFI…SVAL), 504-524 (IGSI…AGAI), 537-557 (GATS…TMLF), and 594-614 (LPFT…GLWF). Residues 641–717 (VGEPVNQDTA…SQNSHGDDAP (77 aa)) are disordered. The span at 646–657 (NQDTAGNMSDSS) shows a compositional bias: polar residues. A compositionally biased stretch (low complexity) spans 678–688 (SSGLSSNGSEN). 5 consecutive transmembrane segments (helical) span residues 726-746 (IILL…VEHV), 762-782 (LTLF…SFAL), 794-814 (SAYA…YSLF), 828-848 (LFTM…VFLL), and 859-879 (YFKG…FTFF).

The protein belongs to the Ca(2+):cation antiporter (CaCA) (TC 2.A.19) family.

The protein localises to the endoplasmic reticulum membrane. Its function is as follows. Putative cation exchanger. This is Putative cation exchanger C521.04c from Schizosaccharomyces pombe (strain 972 / ATCC 24843) (Fission yeast).